The following is a 1279-amino-acid chain: ATP-dependent helicase/nuclease subunit A (1279 aa).

The UvrD-like helicase ATP-binding domain maps to 4–499; sequence TKWTDEQRQA…VKLFKNFRSR (496 aa). 25–32 provides a ligand contact to ATP; the sequence is AGAGAGKT. One can recognise a UvrD-like helicase C-terminal domain in the interval 526–853; the sequence is EEALKVGASY…RIMSIHKSKG (328 aa).

The protein belongs to the helicase family. AddA subfamily. Heterodimer of AddA and AddB/RexB. It depends on Mg(2+) as a cofactor.

The enzyme catalyses Couples ATP hydrolysis with the unwinding of duplex DNA by translocating in the 3'-5' direction.. The catalysed reaction is ATP + H2O = ADP + phosphate + H(+). The heterodimer acts as both an ATP-dependent DNA helicase and an ATP-dependent, dual-direction single-stranded exonuclease. Recognizes the chi site generating a DNA molecule suitable for the initiation of homologous recombination. The AddA nuclease domain is required for chi fragment generation; this subunit has the helicase and 3' -&gt; 5' nuclease activities. This is ATP-dependent helicase/nuclease subunit A from Clostridium botulinum (strain 657 / Type Ba4).